The sequence spans 147 residues: Hemoglobin subunit beta-A/B (147 aa).

The region spanning 2–147 (EWTDAERSAI…VVNALKRQYH (146 aa)) is the Globin domain. His-63 and His-92 together coordinate heme b.

The protein belongs to the globin family. As to quaternary structure, heterotetramer of two alpha chains and two beta chains. Red blood cells.

Its function is as follows. Involved in oxygen transport from gills to the various peripheral tissues. The protein is Hemoglobin subunit beta-A/B of Cyprinus carpio (Common carp).